We begin with the raw amino-acid sequence, 378 residues long: Vacuolar membrane protein CAGL0J10076g (378 aa).

A disordered region spans residues 18–70 (RGLPRLVTTSTTPTPTTEPTTEPTTTKDETSQTSATDASTATTSTAATSTAAT). 2 stretches are compositionally biased toward low complexity: residues 25–41 (TTSTTPTPTTEPTTEPT) and 48–70 (SQTSATDASTATTSTAATSTAAT). The helical transmembrane segment at 118–138 (FIAVGSIAGAILMLIFLWWSI) threads the bilayer. The tract at residues 299–368 (NDYDTPLIPD…ARDHRKTPSM (70 aa)) is disordered. Positions 321–337 (RSHRKTPSNDKYHRRNR) are enriched in basic residues. Residues 343–356 (SPSRSPTRTPIRTR) are compositionally biased toward low complexity.

It belongs to the PRM5 family.

It localises to the vacuole membrane. The polypeptide is Vacuolar membrane protein CAGL0J10076g (Candida glabrata (strain ATCC 2001 / BCRC 20586 / JCM 3761 / NBRC 0622 / NRRL Y-65 / CBS 138) (Yeast)).